We begin with the raw amino-acid sequence, 404 residues long: Queuine tRNA-ribosyltransferase catalytic subunit (404 aa).

D98 serves as the catalytic Proton acceptor. Substrate-binding positions include 98–102 (DSGGF), D152, Q195, and G222. The segment at 253–259 (GVGYAED) is RNA binding. The active-site Nucleophile is the D272. Residues 277–281 (TRTAR) form an RNA binding; important for wobble base 34 recognition region. Zn(2+)-binding residues include C310, C312, C315, and H347.

Belongs to the queuine tRNA-ribosyltransferase family. As to quaternary structure, heterodimer of a catalytic subunit and an accessory subunit. Zn(2+) serves as cofactor.

Its subcellular location is the cytoplasm. It is found in the nucleus. The catalysed reaction is guanosine(34) in tRNA + queuine = queuosine(34) in tRNA + guanine. Functionally, catalytic subunit of the queuine tRNA-ribosyltransferase (TGT) that catalyzes the base-exchange of a guanine (G) residue with queuine (Q) at position 34 (anticodon wobble position) in tRNAs with GU(N) anticodons (tRNA-Asp, -Asn, -His and -Tyr), resulting in the hypermodified nucleoside queuosine (7-(((4,5-cis-dihydroxy-2-cyclopenten-1-yl)amino)methyl)-7-deazaguanosine). Catalysis occurs through a double-displacement mechanism. The nucleophile active site attacks the C1' of nucleotide 34 to detach the guanine base from the RNA, forming a covalent enzyme-RNA intermediate. The proton acceptor active site deprotonates the incoming queuine, allowing a nucleophilic attack on the C1' of the ribose to form the product. The chain is Queuine tRNA-ribosyltransferase catalytic subunit from Schizosaccharomyces pombe (strain 972 / ATCC 24843) (Fission yeast).